The sequence spans 128 residues: Large ribosomal subunit protein uL22 (128 aa).

This sequence belongs to the universal ribosomal protein uL22 family. Part of the 50S ribosomal subunit.

Functionally, this protein binds specifically to 23S rRNA; its binding is stimulated by other ribosomal proteins, e.g. L4, L17, and L20. It is important during the early stages of 50S assembly. It makes multiple contacts with different domains of the 23S rRNA in the assembled 50S subunit and ribosome. In terms of biological role, the globular domain of the protein is located near the polypeptide exit tunnel on the outside of the subunit, while an extended beta-hairpin is found that lines the wall of the exit tunnel in the center of the 70S ribosome. This is Large ribosomal subunit protein uL22 from Prochlorococcus marinus (strain MIT 9312).